The following is a 396-amino-acid chain: Deoxyuridine 5'-triphosphate nucleotidohydrolase (396 aa).

Residues 280–282 and 380–381 each bind substrate; these read RSS and FG.

This sequence belongs to the dUTPase family. The cofactor is Mg(2+).

It carries out the reaction dUTP + H2O = dUMP + diphosphate + H(+). Its function is as follows. Involved in nucleotide metabolism: produces dUMP, the immediate precursor of thymidine nucleotides and decreases the intracellular concentration of dUTP to avoid uracil incorporation into viral DNA. The sequence is that of Deoxyuridine 5'-triphosphate nucleotidohydrolase from Homo sapiens (Human).